Here is an 87-residue protein sequence, read N- to C-terminus: UPF0367 protein P9303_26451 (87 aa).

Belongs to the UPF0367 family.

The sequence is that of UPF0367 protein P9303_26451 from Prochlorococcus marinus (strain MIT 9303).